We begin with the raw amino-acid sequence, 222 residues long: Small ribosomal subunit protein eS1 (222 aa).

This sequence belongs to the eukaryotic ribosomal protein eS1 family.

This chain is Small ribosomal subunit protein eS1, found in Methanocaldococcus jannaschii (strain ATCC 43067 / DSM 2661 / JAL-1 / JCM 10045 / NBRC 100440) (Methanococcus jannaschii).